Here is a 1941-residue protein sequence, read N- to C-terminus: WD repeat-containing protein 81 (1941 aa).

Residues 1-27 (MAQGSGGREGALRTPAGGWHSPPSPDM) are disordered. A necessary and sufficient for the interaction with SQSTM1 region spans residues 1–650 (MAQGSGGREG…TPCEASWTRD (650 aa)). Positions 337–614 (GQPTGQEELR…IPKLLVQTIQ (278 aa)) constitute a BEACH domain. Disordered regions lie at residues 618–637 (GREDFTENPGQLPNGVGRPV), 694–718 (VASASRPGRRNKAAGADPGEGEEGR), 1022–1074 (SKDL…VSFH), 1097–1217 (PQEA…EGKE), 1523–1556 (PSSRNPASVEPTMPGTGPEWDPHGGGCPQDDGHS), and 1569–1602 (QIPNDSRPENPGPLGPISGVGGGGLGSGSDDNAL). Residues 1137-1146 (LRSGDSSQDL) are compositionally biased toward polar residues. The segment covering 1151–1174 (GSEEEEEEEDSCVVLEEEEGEQEE) has biased composition (acidic residues). Gly residues predominate over residues 1586–1595 (SGVGGGGLGS). WD repeat units follow at residues 1639–1677 (IRLQSFPGHSGAVKCVAPLSSEDFFLSGSKDRTVRLWPL), 1686–1724 (ETAPRLVYTQHRKSVFFVGQLEAPQHVVSCDGAVHVWDP), 1729–1769 (TLRT…FVDC), 1777–1815 (EFRLGGGLNPGLVRALAISPSGRSVVAGFSSGFMVLLDT), 1819–1856 (LVLRGWPAHEGDILQIKAVEGSVLVSSSSDHSLTVWKE), 1860–1896 (KPTHHYKSASDPIHTFDLYGSEVVTGTVSNKIGVCSL), and 1902–1941 (QATTKLSSENFRGTLTSLALLPTKRHLLLGSDNGVIRLLA).

This sequence belongs to the WD repeat WDR81 family. In terms of assembly, interacts with WDR91; involved in early to late endosome cargo transport. Interacts with BECN1; negatively regulates the PI3 kinase/PI3K activity associated with endosomal membranes. Interacts with SQSTM1; the interaction is direct and regulates the interaction of SQSTM1 with ubiquitinated proteins. Interacts with MAP1LC3C; recruits MAP1LC3C to ubiquitinated protein aggregates in the aggrephagy process. In terms of tissue distribution, widely expressed. In the brain, highest levels in cerebellum and corpus callosum.

Its subcellular location is the early endosome membrane. It is found in the late endosome membrane. It localises to the lysosome membrane. The protein localises to the cytoplasmic vesicle. The protein resides in the autophagosome membrane. Its subcellular location is the mitochondrion. It is found in the cytoplasm. It localises to the cytosol. In terms of biological role, functions as a negative regulator of the PI3 kinase/PI3K activity associated with endosomal membranes via BECN1, a core subunit of the PI3K complex. By modifying the phosphatidylinositol 3-phosphate/PtdInsP3 content of endosomal membranes may regulate endosome fusion, recycling, sorting and early to late endosome transport. It is for instance, required for the delivery of cargos like BST2/tetherin from early to late endosome and thereby participates indirectly to their degradation by the lysosome. May also play a role in aggrephagy, the macroautophagic degradation of ubiquitinated protein aggregates. In this process, may regulate the interaction of SQSTM1 with ubiquitinated proteins and also recruit MAP1LC3C. May also be involved in maintenance of normal mitochondrial structure and organization. This Homo sapiens (Human) protein is WD repeat-containing protein 81.